An 829-amino-acid polypeptide reads, in one-letter code: Leucine--tRNA ligase (829 aa).

The 'HIGH' region motif lies at 40–50 (PYPSGNIHMGH). The short motif at 581-585 (KMSKS) is the 'KMSKS' region element. Lysine 584 is an ATP binding site.

Belongs to the class-I aminoacyl-tRNA synthetase family.

The protein localises to the cytoplasm. The catalysed reaction is tRNA(Leu) + L-leucine + ATP = L-leucyl-tRNA(Leu) + AMP + diphosphate. The protein is Leucine--tRNA ligase of Oleidesulfovibrio alaskensis (strain ATCC BAA-1058 / DSM 17464 / G20) (Desulfovibrio alaskensis).